Consider the following 451-residue polypeptide: Serine/threonine-protein phosphatase 2A 55 kDa regulatory subunit B delta isoform (451 aa).

WD repeat units follow at residues 30–69 (AEADIISTVEFNYSGDLLATGDKGGRVVIFQREQENKSRP), 95–136 (EIEE…KRAE), 179–217 (AHTYHINSISVNSDHETYLSADDLRINLWHLEITDRSFN), 228–268 (ELTE…LCDR), 287–325 (EIISSISDVKFSHSGRYMMTRDYLSVKVWDLNMENRPVE), 342–383 (ENDC…DITL), and 418–451 (DFNKKILHTAWHPMENIIAVAATNNLYIFQDKIN).

The protein belongs to the phosphatase 2A regulatory subunit B family. In terms of assembly, PP2A consists of a common heterodimeric core enzyme, composed of a 36 kDa catalytic subunit (subunit C) and a 65 kDa constant regulatory subunit (PR65 or subunit A), that associates with a variety of regulatory subunits.

Its subcellular location is the cytoplasm. Its function is as follows. Substrate-recognition subunit of protein phosphatase 2A (PP2A) that plays a key role in cell cycle by controlling mitosis entry and exit. The activity of PP2A complexes containing PPP2R2D (PR55-delta) fluctuate during the cell cycle: the activity is high in interphase and low in mitosis. The protein is Serine/threonine-protein phosphatase 2A 55 kDa regulatory subunit B delta isoform (PPP2R2D) of Gallus gallus (Chicken).